A 449-amino-acid chain; its full sequence is Heterogeneous nuclear ribonucleoprotein H2 (449 aa).

At Met1 the chain carries N-acetylmethionine. At Met2 the chain carries N-acetylmethionine; in Heterogeneous nuclear ribonucleoprotein H2, N-terminally processed. In terms of domain architecture, RRM 1 spans Phe11 to Ser90. Ser23 is subject to Phosphoserine. A Glycyl lysine isopeptide (Lys-Gly) (interchain with G-Cter in SUMO2) cross-link involves residue Lys35. A phosphoserine mark is found at Ser54 and Ser63. A Glycyl lysine isopeptide (Lys-Gly) (interchain with G-Cter in SUMO2) cross-link involves residue Lys87. Ser90 carries the phosphoserine modification. Lys98 is covalently cross-linked (Glycyl lysine isopeptide (Lys-Gly) (interchain with G-Cter in SUMO2)). The 78-residue stretch at Gly111–Arg188 folds into the RRM 2 domain. The residue at position 233 (Arg233) is a Dimethylated arginine; alternate. Omega-N-methylarginine; alternate is present on Arg233. A 1-1 repeat occupies Gly234–Tyr249. The tract at residues Gly234 to Tyr433 is 2 X 16 AA Gly-rich approximate repeats. Tyr246 carries the post-translational modification Phosphotyrosine. In terms of domain architecture, RRM 3 spans His289–Thr364. Position 310 is a phosphoserine (Ser310). A run of 3 repeats spans residues His354–Tyr372, His374–Tyr392, and Ala418–Tyr433. Residues His354–Tyr392 form a 2 X 19 AA perfect repeats region.

As to quaternary structure, component of a ribonucleoprotein complex containing mRNAs and RNA-binding proteins including DDX5, HNRNPH2 and SRSF1 as well as splicing regulator ARVCF. Interacts with TXNL4/DIM1.

Its subcellular location is the nucleus. It is found in the nucleoplasm. Functionally, this protein is a component of the heterogeneous nuclear ribonucleoprotein (hnRNP) complexes which provide the substrate for the processing events that pre-mRNAs undergo before becoming functional, translatable mRNAs in the cytoplasm. Binds poly(RG). This Rattus norvegicus (Rat) protein is Heterogeneous nuclear ribonucleoprotein H2 (Hnrnph2).